The chain runs to 279 residues: Thymidylate synthase (279 aa).

Residue 133-134 (RR) participates in dUMP binding. Catalysis depends on C154, which acts as the Nucleophile. DUMP contacts are provided by residues 178 to 181 (RSND), N189, and 219 to 221 (HIY). Residue D181 participates in (6R)-5,10-methylene-5,6,7,8-tetrahydrofolate binding. Residue A278 participates in (6R)-5,10-methylene-5,6,7,8-tetrahydrofolate binding.

Belongs to the thymidylate synthase family. Bacterial-type ThyA subfamily. In terms of assembly, homodimer.

It is found in the cytoplasm. It catalyses the reaction dUMP + (6R)-5,10-methylene-5,6,7,8-tetrahydrofolate = 7,8-dihydrofolate + dTMP. It functions in the pathway pyrimidine metabolism; dTTP biosynthesis. In terms of biological role, catalyzes the reductive methylation of 2'-deoxyuridine-5'-monophosphate (dUMP) to 2'-deoxythymidine-5'-monophosphate (dTMP) while utilizing 5,10-methylenetetrahydrofolate (mTHF) as the methyl donor and reductant in the reaction, yielding dihydrofolate (DHF) as a by-product. This enzymatic reaction provides an intracellular de novo source of dTMP, an essential precursor for DNA biosynthesis. The protein is Thymidylate synthase of Streptococcus gordonii (strain Challis / ATCC 35105 / BCRC 15272 / CH1 / DL1 / V288).